Here is a 180-residue protein sequence, read N- to C-terminus: MMPRLQEKYEKEVVSALMDKFGYKNIMEVPKLEKIVINMGVGEAKENQKSLEAAVEDLAKITGQKPILTKAKKSVANFKIREDMPLGCKVTLRKQNMYEFADKLINVALPRVRDFSGVSSKSFDGRGNYAIGIKEQLIFPEIEFDKIDKIRGMDIIFVTTAKTDEEARELLRFLGMPFAR.

Belongs to the universal ribosomal protein uL5 family. As to quaternary structure, part of the 50S ribosomal subunit; part of the 5S rRNA/L5/L18/L25 subcomplex. Contacts the 5S rRNA and the P site tRNA. Forms a bridge to the 30S subunit in the 70S ribosome.

Its function is as follows. This is one of the proteins that bind and probably mediate the attachment of the 5S RNA into the large ribosomal subunit, where it forms part of the central protuberance. In the 70S ribosome it contacts protein S13 of the 30S subunit (bridge B1b), connecting the 2 subunits; this bridge is implicated in subunit movement. Contacts the P site tRNA; the 5S rRNA and some of its associated proteins might help stabilize positioning of ribosome-bound tRNAs. The polypeptide is Large ribosomal subunit protein uL5 (Clostridium botulinum (strain ATCC 19397 / Type A)).